Consider the following 72-residue polypeptide: Large ribosomal subunit protein uL29 (72 aa).

This sequence belongs to the universal ribosomal protein uL29 family.

The polypeptide is Large ribosomal subunit protein uL29 (Thermodesulfovibrio yellowstonii (strain ATCC 51303 / DSM 11347 / YP87)).